A 572-amino-acid polypeptide reads, in one-letter code: MEYWKHTNHGKDACNELGTSMATHGNKITNKITYILWTIILVLLSIIFIIVLINSIKSEKAHESLLQDVNNEFMEVTEKIQMASDNINDLIQSGVNTRLLTIQSHVQNYIPISLTQQMSDLRKFISEITIRNDNQEVPPQRITHDVGIKPLNPDDFWRCTSGLPSLMKTPKIRLMPGPGLLAMPTTVDGCVRTPSLVINDLIYAYTSNLITRGCQDIGKSYQVLQIGIITVNSDLVPDLNPRISHTFNINDNRKSCSLALLNTDVYQLCSTPKVDERSDYASSGIEDIVLDIVNHDGSISTTRFKNNNISFDQPYAALYPSVGPGIYYKGKIIFLGYGGLEHPINENAICNTTGCPGKTQRDCNQASHSPWFSDRRMVNSIIVVDKGLNSIPKLKVWTISMRQNYWGSEGRLLLLGNKIYIYTRSTSWHSKLQLGIIDITDYSDIRIKWTWHNVLSRPGNNECPWGHSCPDGCITGVYTDAYPLNPTGSIVSSVILDSQKTRVNPVITYSTATERVNELAIRNKTLSAGYTTTSCITHYNKGYCFHIVEINHKSLDTFQPMLFKTEIPKSCS.

At 1 to 31 the chain is on the intravirion side; the sequence is MEYWKHTNHGKDACNELGTSMATHGNKITNK. Residues 32–52 form a helical membrane-spanning segment; it reads ITYILWTIILVLLSIIFIIVL. Topologically, residues 53-572 are virion surface; sequence INSIKSEKAH…FKTEIPKSCS (520 aa). 2 cysteine pairs are disulfide-bonded: Cys-190-Cys-214 and Cys-256-Cys-269. Residues 252–257 form an involved in neuraminidase activity region; that stretch reads NRKSCS. Asn-308 and Asn-351 each carry an N-linked (GlcNAc...) asparagine; by host glycan. Disulfide bonds link Cys-355–Cys-469 and Cys-463–Cys-473. N-linked (GlcNAc...) asparagine; by host glycosylation is present at Asn-523. An intrachain disulfide couples Cys-535 to Cys-544.

It belongs to the paramyxoviruses hemagglutinin-neuraminidase family. In terms of assembly, homotetramer; composed of disulfide-linked homodimers. Interacts with F protein trimer.

The protein localises to the virion membrane. The protein resides in the host cell membrane. It catalyses the reaction Hydrolysis of alpha-(2-&gt;3)-, alpha-(2-&gt;6)-, alpha-(2-&gt;8)- glycosidic linkages of terminal sialic acid residues in oligosaccharides, glycoproteins, glycolipids, colominic acid and synthetic substrates.. Functionally, attaches the virus to sialic acid-containing cell receptors and thereby initiating infection. Binding of HN protein to the receptor induces a conformational change that allows the F protein to trigger virion/cell membranes fusion. In terms of biological role, neuraminidase activity ensures the efficient spread of the virus by dissociating the mature virions from the neuraminic acid containing glycoproteins. The sequence is that of Hemagglutinin-neuraminidase (HN) from Homo sapiens (Human).